Reading from the N-terminus, the 82-residue chain is Small ribosomal subunit protein bS18 (82 aa).

The tract at residues 1–25 (MKRNNMKRARMEQSRRPKKNPLKAE) is disordered.

Belongs to the bacterial ribosomal protein bS18 family. Part of the 30S ribosomal subunit. Forms a tight heterodimer with protein bS6.

Binds as a heterodimer with protein bS6 to the central domain of the 16S rRNA, where it helps stabilize the platform of the 30S subunit. In Corynebacterium urealyticum (strain ATCC 43042 / DSM 7109), this protein is Small ribosomal subunit protein bS18.